Reading from the N-terminus, the 359-residue chain is Stearoyl-CoA desaturase (359 aa).

The Cytoplasmic segment spans residues 1–72 (MPAHLLQEEI…EGPKPKLEYV (72 aa)). Residues 73–93 (WRNIILMSLLHLGALYGITLI) form a helical membrane-spanning segment. Residue N75 participates in substrate binding. Residues 94–97 (PTCK) lie on the Lumenal side of the membrane. The chain crosses the membrane as a helical span at residues 98-118 (IYTYIWVLFYYLMGALGITAG). Residues 119–217 (AHRLWSHRTY…EKLVMFQRRY (99 aa)) lie on the Cytoplasmic side of the membrane. 2 residues coordinate Fe cation: H120 and H125. Residues 120–125 (HRLWSH) carry the Histidine box-1 motif. Positions 148, 155, and 156 each coordinate substrate. Residues H157, H160, and H161 each coordinate Fe cation. The Histidine box-2 motif lies at 157–161 (HRAHH). Substrate-binding residues include R188 and K189. Phosphoserine occurs at positions 198 and 203. The helical transmembrane segment at 218–237 (YKPGVLLLCFILPTLVPWYL) threads the bilayer. Residues 238–241 (WDET) are Lumenal-facing. The chain crosses the membrane as a helical span at residues 242–263 (FQNSLFFATLFRYALGLNVTWL). W262 serves as a coordination point for substrate. The Cytoplasmic segment spans residues 264–359 (VNSAAHMYGY…RTGEESYKSG (96 aa)). Fe cation contacts are provided by H269, H298, H301, and H302. The Histidine box-3 signature appears at 298–302 (HNYHH).

Belongs to the fatty acid desaturase type 1 family. The cofactor is Fe(2+).

It localises to the endoplasmic reticulum membrane. The enzyme catalyses octadecanoyl-CoA + 2 Fe(II)-[cytochrome b5] + O2 + 2 H(+) = (9Z)-octadecenoyl-CoA + 2 Fe(III)-[cytochrome b5] + 2 H2O. The catalysed reaction is hexadecanoyl-CoA + 2 Fe(II)-[cytochrome b5] + O2 + 2 H(+) = (9Z)-hexadecenoyl-CoA + 2 Fe(III)-[cytochrome b5] + 2 H2O. In terms of biological role, stearoyl-CoA desaturase that utilizes O(2) and electrons from reduced cytochrome b5 to introduce the first double bond into saturated fatty acyl-CoA substrates. Catalyzes the insertion of a cis double bond at the delta-9 position into fatty acyl-CoA substrates including palmitoyl-CoA and stearoyl-CoA. Gives rise to a mixture of 16:1 and 18:1 unsaturated fatty acids. Plays an important role in lipid biosynthesis. Plays an important role in regulating the expression of genes that are involved in lipogenesis and in regulating mitochondrial fatty acid oxidation. Plays an important role in body energy homeostasis. Contributes to the biosynthesis of membrane phospholipids, cholesterol esters and triglycerides. In Bos taurus (Bovine), this protein is Stearoyl-CoA desaturase (SCD).